The chain runs to 103 residues: Histone H4 (103 aa).

The disordered stretch occupies residues 1–32 (MNTQSIGAKGKSKAAKGIAKRHRKQSSLSDSI). The segment covering 10-25 (GKSKAAKGIAKRHRKQ) has biased composition (basic residues). The residue at position 16 (Lys-16) is an N6-acetyl-N6-methyllysine; alternate. Position 16 is an N6-methyllysine; alternate (Lys-16). A DNA-binding region spans residues 20–24 (KRHRK). The residue at position 94 (Lys-94) is an N6-glutaryllysine.

The protein belongs to the histone H4 family. The nucleosome is a histone octamer containing two molecules each of H2A, H2B, H3 and H4 assembled in one H3-H4 heterotetramer and two H2A-H2B heterodimers. The octamer wraps approximately 147 bp of DNA. In terms of processing, glutarylation at Lys-94 (H4K91glu) destabilizes nucleosomes by promoting dissociation of the H2A-H2B dimers from nucleosomes.

It localises to the nucleus. Its subcellular location is the chromosome. In terms of biological role, core component of nucleosome. Nucleosomes wrap and compact DNA into chromatin, limiting DNA accessibility to the cellular machineries which require DNA as a template. Histones thereby play a central role in transcription regulation, DNA repair, DNA replication and chromosomal stability. DNA accessibility is regulated via a complex set of post-translational modifications of histones, also called histone code, and nucleosome remodeling. The polypeptide is Histone H4 (HHF1) (Encephalitozoon cuniculi (strain GB-M1) (Microsporidian parasite)).